The following is a 259-amino-acid chain: uncharacterized protein (259 aa).

This is an uncharacterized protein from Aquifex aeolicus (strain VF5).